Consider the following 166-residue polypeptide: Regulatory protein RecX (166 aa).

Belongs to the RecX family.

The protein resides in the cytoplasm. Its function is as follows. Modulates RecA activity. This chain is Regulatory protein RecX, found in Klebsiella pneumoniae subsp. pneumoniae (strain ATCC 700721 / MGH 78578).